The sequence spans 124 residues: Fluoride-specific ion channel FluC (124 aa).

A run of 4 helical transmembrane segments spans residues 1–21 (MIPLILAVSAGGVAGTLLRFA), 38–58 (TLAVNIVGCLLIGVLYGLFLV), 69–89 (GLIVGFLGGLTTFSSFSLDTV), and 97–117 (VALALGYAALSVFGGLLATWA). Na(+)-binding residues include Gly76 and Thr79.

This sequence belongs to the fluoride channel Fluc/FEX (TC 1.A.43) family.

The protein resides in the cell inner membrane. The catalysed reaction is fluoride(in) = fluoride(out). With respect to regulation, na(+) is not transported, but it plays an essential structural role and its presence is essential for fluoride channel function. In terms of biological role, fluoride-specific ion channel. Important for reducing fluoride concentration in the cell, thus reducing its toxicity. This chain is Fluoride-specific ion channel FluC, found in Pseudomonas fluorescens (strain ATCC BAA-477 / NRRL B-23932 / Pf-5).